The primary structure comprises 109 residues: Nucleoid-associated protein VP2178 (109 aa).

2 disordered regions span residues 1-22 (MFGK…ERMQ) and 88-109 (QKEK…KMPF).

The protein belongs to the YbaB/EbfC family. As to quaternary structure, homodimer.

It localises to the cytoplasm. It is found in the nucleoid. Binds to DNA and alters its conformation. May be involved in regulation of gene expression, nucleoid organization and DNA protection. This Vibrio parahaemolyticus serotype O3:K6 (strain RIMD 2210633) protein is Nucleoid-associated protein VP2178.